The following is a 189-amino-acid chain: Sec-independent protein translocase protein TatB (189 aa).

The helical transmembrane segment at 1–21 threads the bilayer; the sequence is MFGVGIFEVLVILIVAVIALG. The segment at 152 to 189 is disordered; sequence TQKPQNSIDSINSKESSVDSLHSPSIVESTQSSSSKDS. A compositionally biased stretch (polar residues) spans 153–189; the sequence is QKPQNSIDSINSKESSVDSLHSPSIVESTQSSSSKDS.

Belongs to the TatB family. The Tat system comprises two distinct complexes: a TatABC complex, containing multiple copies of TatA, TatB and TatC subunits, and a separate TatA complex, containing only TatA subunits. Substrates initially bind to the TatABC complex, which probably triggers association of the separate TatA complex to form the active translocon.

It localises to the cell inner membrane. Functionally, part of the twin-arginine translocation (Tat) system that transports large folded proteins containing a characteristic twin-arginine motif in their signal peptide across membranes. Together with TatC, TatB is part of a receptor directly interacting with Tat signal peptides. TatB may form an oligomeric binding site that transiently accommodates folded Tat precursor proteins before their translocation. In Helicobacter hepaticus (strain ATCC 51449 / 3B1), this protein is Sec-independent protein translocase protein TatB.